We begin with the raw amino-acid sequence, 337 residues long: Cysteinyl leukotriene receptor 1 (337 aa).

At 1-28 (MDETGNLTVSSATCHDTIDDFRNQVYST) the chain is on the extracellular side. A glycan (N-linked (GlcNAc...) asparagine) is linked at Asn6. Residues 29 to 49 (LYSMISVVGFFGNGFVLYVLI) traverse the membrane as a helical segment. Residues 50–57 (KTYHKKSA) are Cytoplasmic-facing. A helical membrane pass occupies residues 58-78 (FQVYMINLAVADLLCVCTLPL). Topologically, residues 79-106 (RVVYYVHKGIWLFGDFLCRLSTYALYVN) are extracellular. A disulfide bond links Cys96 and Cys173. A helical transmembrane segment spans residues 107 to 127 (LYCSIFFMTAMSFFRCIAIVF). Residues 128–141 (PVQNINLVTQKKAR) are Cytoplasmic-facing. The chain crosses the membrane as a helical span at residues 142–162 (FVCVGIWIFVILTSSPFLMAK). Residues 163 to 193 (PQKDEKNNTKCFEPPQDNQTKNHVLVLHYVS) are Extracellular-facing. N-linked (GlcNAc...) asparagine glycans are attached at residues Asn169 and Asn180. Residues 194–214 (LFVGFIIPFVIIIVCYTMIIL) form a helical membrane-spanning segment. Topologically, residues 215–230 (TLLKKSMKKNLSSHKK) are cytoplasmic. Residues 231-251 (AIGMIMVVTAAFLVSFMPYHI) form a helical membrane-spanning segment. Topologically, residues 252 to 276 (QRTIHLHFLHNETKPCDSVLRMQKS) are extracellular. Asn262 is a glycosylation site (N-linked (GlcNAc...) asparagine). The helical transmembrane segment at 277 to 297 (VVITLSLAASNCCFDPLLYFF) threads the bilayer. The Cytoplasmic portion of the chain corresponds to 298 to 337 (SGGNFRKRLSTFRKHSLSSVTYVPRKKASLPEKGEEICKV).

This sequence belongs to the G-protein coupled receptor 1 family. Widely expressed, with highest levels in spleen and peripheral blood leukocytes. Lower expression in several tissues, such as lung (mostly in smooth muscle bundles and alveolar macrophages), placenta, small intestine, pancreas, colon and heart.

The protein resides in the cell membrane. Its function is as follows. Receptor for cysteinyl leukotrienes mediating bronchoconstriction of individuals with and without asthma. Stimulation by LTD4 results in the contraction and proliferation of smooth muscle, edema, eosinophil migration and damage to the mucus layer in the lung. This response is mediated via a G-protein that activates a phosphatidylinositol-calcium second messenger system. The rank order of affinities for the leukotrienes is LTD4 &gt;&gt; LTE4 = LTC4 &gt;&gt; LTB4. This Homo sapiens (Human) protein is Cysteinyl leukotriene receptor 1 (CYSLTR1).